Consider the following 913-residue polypeptide: Proline and serine-rich protein 1 (913 aa).

The residue at position 1 (methionine 1) is an N-acetylmethionine. Disordered regions lie at residues 233 to 291 (VPPP…PAVS), 488 to 507 (ASLS…ATNK), 592 to 618 (SEPT…TLGL), and 888 to 913 (DGFP…SGWQ). The segment covering 251 to 275 (LSSQSKPTQSQTFSTPASQLFSPHG) has biased composition (polar residues). Over residues 276-291 (SSNPSTPAATPVPAVS) the composition is skewed to low complexity. Residues 488-506 (ASLSSLPNRNSDSPASATN) show a composition bias toward polar residues. Positions 893-913 (YPSTPGTPFSLQTGLSQSGWQ) are enriched in polar residues.

In terms of assembly, interacts with TET2 and OGT; this interaction mediates TET2 O-GlcNAcylation and stability by promoting the interaction between OGT and TET2. Interacts with KDM6A. Interacts with TET1. Post-translationally, glycosylated. Interaction with OGT leads to GlcNAcylation.

Mediates OGT interaction with and O-GlcNAcylation of TET2 to control TET2 stabilization at enhancers and CpG islands (CGIs). This Mus musculus (Mouse) protein is Proline and serine-rich protein 1.